Reading from the N-terminus, the 103-residue chain is Putative ribosomal RNA-processing protein 7 homolog B (103 aa).

Residues 1–19 (MEAYDQKIAEEEAKAKEEE) show a composition bias toward basic and acidic residues. The tract at residues 1–25 (MEAYDQKIAEEEAKAKEEEGVPDEE) is disordered. The stretch at 71–100 (ESKMEHLAQLRKKFEEDKQRIELLRAQRKF) forms a coiled coil.

The protein belongs to the RRP7 family.

The protein is Putative ribosomal RNA-processing protein 7 homolog B of Homo sapiens (Human).